Here is a 255-residue protein sequence, read N- to C-terminus: Acetylglutamate kinase (255 aa).

Residues 40 to 41 (GG), arginine 62, and asparagine 153 contribute to the substrate site.

This sequence belongs to the acetylglutamate kinase family. ArgB subfamily.

The protein resides in the cytoplasm. It catalyses the reaction N-acetyl-L-glutamate + ATP = N-acetyl-L-glutamyl 5-phosphate + ADP. Its pathway is amino-acid biosynthesis; L-arginine biosynthesis; N(2)-acetyl-L-ornithine from L-glutamate: step 2/4. Its function is as follows. Catalyzes the ATP-dependent phosphorylation of N-acetyl-L-glutamate. The polypeptide is Acetylglutamate kinase (Bacillus anthracis (strain A0248)).